Here is a 254-residue protein sequence, read N- to C-terminus: uncharacterized protein (254 aa).

Positions 163-182 are disordered; sequence PNKHTQHKRSTRRTSPKDYN. Basic residues predominate over residues 166-176; that stretch reads HTQHKRSTRRT. Residues 207-227 form a helical membrane-spanning segment; it reads AHSAWILIIIIIIIVVILFFF.

Belongs to the RL11 family.

Its subcellular location is the host membrane. This is an uncharacterized protein from Human cytomegalovirus (strain Merlin) (HHV-5).